The following is a 226-amino-acid chain: PKHD-type hydroxylase BP3529 (226 aa).

A Fe2OG dioxygenase domain is found at 78–178 (KIFPPLFNRY…RISAFFWLQS (101 aa)). 3 residues coordinate Fe cation: histidine 96, aspartate 98, and histidine 159. Arginine 169 serves as a coordination point for 2-oxoglutarate.

It depends on Fe(2+) as a cofactor. L-ascorbate is required as a cofactor.

The protein is PKHD-type hydroxylase BP3529 of Bordetella pertussis (strain Tohama I / ATCC BAA-589 / NCTC 13251).